A 454-amino-acid polypeptide reads, in one-letter code: Gustatory and odorant receptor 21a (454 aa).

Over M1–S114 the chain is Cytoplasmic. The chain crosses the membrane as a helical span at residues K115–L135. Residues R136 to A153 are Extracellular-facing. Residues I154–W174 traverse the membrane as a helical segment. Over R175–N206 the chain is Cytoplasmic. The helical transmembrane segment at L207 to L227 threads the bilayer. Residues S228–R237 are Extracellular-facing. A helical membrane pass occupies residues L238 to W258. Residues Y259–N312 are Cytoplasmic-facing. A helical transmembrane segment spans residues M313–I333. Over S334–E345 the chain is Extracellular. The helical transmembrane segment at V346 to A366 threads the bilayer. At H367 to E422 the chain is on the cytoplasmic side. A helical transmembrane segment spans residues L423–I443. The Extracellular portion of the chain corresponds to T444–A454.

The protein belongs to the insect chemoreceptor superfamily. Gustatory receptor (GR) family. Gr21a subfamily. As to quaternary structure, gr21a and Gr63a probably form a heterodimer that responds to CO(2). Expressed in the adult labellar chemosensory neurons. Carbon dioxide-responsive neurons coexpress Gr21a and Gr63a in a pair of chemosensory receptors at both larval and adult life stages. A single bilateral neuron, expressing the Gr21a receptor, is responsible for CO(2) detection in larvae.

The protein localises to the cell membrane. Functionally, gustatory and odorant receptor which mediates acceptance or avoidance behavior, depending on its substrates. Gr21a and Gr63a together are sufficient for carbon dioxide detection and avoidance behavior. It is possible that the CO(2) receptors Gr63a and Gr21a activate the TRPC channels through Galpha49B and Plc21C. This innate olfactory avoidance behavior can be inhibited by inhibitory interactions of the odors such as 1-hexanol and 2,3-butanedione with Gr21a and Gr63a. The polypeptide is Gustatory and odorant receptor 21a (Gr21a) (Drosophila melanogaster (Fruit fly)).